Consider the following 159-residue polypeptide: Phosphopantetheine adenylyltransferase (159 aa).

Threonine 10 provides a ligand contact to substrate. ATP contacts are provided by residues 10-11 and histidine 18; that span reads TF. 3 residues coordinate substrate: lysine 42, leucine 74, and arginine 88. ATP contacts are provided by residues 89 to 91, glutamate 99, and 124 to 130; these read GLR and YAFISSS.

The protein belongs to the bacterial CoaD family. As to quaternary structure, homohexamer. The cofactor is Mg(2+).

Its subcellular location is the cytoplasm. The enzyme catalyses (R)-4'-phosphopantetheine + ATP + H(+) = 3'-dephospho-CoA + diphosphate. It functions in the pathway cofactor biosynthesis; coenzyme A biosynthesis; CoA from (R)-pantothenate: step 4/5. Reversibly transfers an adenylyl group from ATP to 4'-phosphopantetheine, yielding dephospho-CoA (dPCoA) and pyrophosphate. In Hydrogenovibrio crunogenus (strain DSM 25203 / XCL-2) (Thiomicrospira crunogena), this protein is Phosphopantetheine adenylyltransferase.